Consider the following 222-residue polypeptide: Phosphoribosylformylglycinamidine synthase subunit PurQ (222 aa).

A Glutamine amidotransferase type-1 domain is found at 2-222 (RTAVIQFPGS…FESLKGALVQ (221 aa)). Cys-87 serves as the catalytic Nucleophile. Residues His-195 and Glu-197 contribute to the active site.

In terms of assembly, part of the FGAM synthase complex composed of 1 PurL, 1 PurQ and 2 PurS subunits.

It localises to the cytoplasm. The enzyme catalyses N(2)-formyl-N(1)-(5-phospho-beta-D-ribosyl)glycinamide + L-glutamine + ATP + H2O = 2-formamido-N(1)-(5-O-phospho-beta-D-ribosyl)acetamidine + L-glutamate + ADP + phosphate + H(+). It catalyses the reaction L-glutamine + H2O = L-glutamate + NH4(+). It participates in purine metabolism; IMP biosynthesis via de novo pathway; 5-amino-1-(5-phospho-D-ribosyl)imidazole from N(2)-formyl-N(1)-(5-phospho-D-ribosyl)glycinamide: step 1/2. Its function is as follows. Part of the phosphoribosylformylglycinamidine synthase complex involved in the purines biosynthetic pathway. Catalyzes the ATP-dependent conversion of formylglycinamide ribonucleotide (FGAR) and glutamine to yield formylglycinamidine ribonucleotide (FGAM) and glutamate. The FGAM synthase complex is composed of three subunits. PurQ produces an ammonia molecule by converting glutamine to glutamate. PurL transfers the ammonia molecule to FGAR to form FGAM in an ATP-dependent manner. PurS interacts with PurQ and PurL and is thought to assist in the transfer of the ammonia molecule from PurQ to PurL. In Deinococcus geothermalis (strain DSM 11300 / CIP 105573 / AG-3a), this protein is Phosphoribosylformylglycinamidine synthase subunit PurQ.